Here is a 501-residue protein sequence, read N- to C-terminus: Solute carrier family 2, facilitated glucose transporter member 5 (501 aa).

Position 1 is an N-acetylmethionine (Met1). Residues 1-17 (MEEKHQEETGELTLVLA) lie on the Cytoplasmic side of the membrane. Residues 18 to 38 (LATLIAAFGSSFQYGYNVAAV) traverse the membrane as a helical segment. Position 31 (Tyr31) interacts with D-fructose. Residues 39–67 (NSPSEFMQQFYNDTYYDRNEENIESFTLT) are Extracellular-facing. The N-linked (GlcNAc...) asparagine glycan is linked to Asn50. Residues 68-90 (LLWSLTVSMFPFGGFIGSLMVGT) form a helical membrane-spanning segment. Residues 91-97 (LVNKLGR) are Cytoplasmic-facing. A helical transmembrane segment spans residues 98-118 (KGALLFNNIFSILPAILMGCS). Over 119–125 (QIAQSFE) the chain is Extracellular. Residues 126-148 (LIIISRLLVGICAGISSNVVPMY) form a helical membrane-spanning segment. At 149-160 (LGELAPKNLRGA) the chain is on the cytoplasmic side. Residues 161–181 (LGVVPQLFITVGILVAQLFGL) form a helical membrane-spanning segment. Gln166 provides a ligand contact to D-fructose. The Extracellular segment spans residues 182–191 (RSLLANEDGW). The chain crosses the membrane as a helical span at residues 192 to 212 (PVLLGLTGVPAGLQLLLLPFF). At 213 to 276 (PESPRYLLIQ…LFTMQSLRWQ (64 aa)) the chain is on the cytoplasmic side. A helical transmembrane segment spans residues 277 to 297 (LISMIVLMAGQQLSGVNAIYY). Residues Gln287 and 295–297 (IYY) contribute to the D-fructose site. Over 298-312 (YADQIYLSAGVKSDD) the chain is Extracellular. The chain crosses the membrane as a helical span at residues 313–333 (VQYVTAGTGAVNVFMTILTIF). Residues 334 to 341 (VVELWGRR) lie on the Cytoplasmic side of the membrane. A helical transmembrane segment spans residues 342–362 (FLLLVGFSTCLIACLVLTAAL). Over 363-370 (ALQNTISW) the chain is Extracellular. A helical transmembrane segment spans residues 371 to 393 (MPYISIVCVIVYVIGHALGPSPI). A D-fructose-binding site is contributed by His386. Topologically, residues 394–411 (PALLITEIFLQSSRPAAY) are cytoplasmic. The chain crosses the membrane as a helical span at residues 412–432 (MIGGSVHWLSNFTVGLIFPFI). 418-419 (HW) is a D-fructose binding site. At 433–438 (QMGLGP) the chain is on the extracellular side. A helical membrane pass occupies residues 439–459 (YSFIIFATICFLTTIYIFMVV). Residues 460-501 (PETKGRTFIEINQIFTMKNKVSDVYPKKEEELGALPHAILEQ) are Cytoplasmic-facing.

It belongs to the major facilitator superfamily. Sugar transporter (TC 2.A.1.1) family. Glucose transporter subfamily. As to expression, detected at the apical membrane of villi in the jejunum. Detected in jejunum mucosa. Detected in epididymis and whole testis (at protein level). Detected in small intestine, kidney and testis. Detected in cochlea, but not in inner or outer cochlear hair cells.

The protein resides in the apical cell membrane. It is found in the cell membrane. The protein localises to the sarcolemma. It carries out the reaction D-fructose(out) = D-fructose(in). Its activity is regulated as follows. Fructose uptake is inhibited by cytochalasin B. Functions as a fructose transporter that has only low activity with other monosaccharides. Can mediate the uptake of deoxyglucose, but with low efficiency. Essential for fructose uptake in the small intestine. Plays a role in the regulation of salt uptake and blood pressure in response to dietary fructose. Required for the development of high blood pressure in response to high dietary fructose intake. This is Solute carrier family 2, facilitated glucose transporter member 5 from Mus musculus (Mouse).